The sequence spans 465 residues: MTQRVRTRFAPSPTGFIHLGNIRSAFYPWAFARRMKGDFILRIEDTDVERSTDVAVDVILESMAWLDLDIDEGPFYQMQRMDRYREVVQQMLDNELAYHCYMSTEELDALREAQRAAGEKPRYNGFWRPEPGKVLPEPPAGVQPVVRFKNPIGGSVVWDDAVKGRIEISNDELDDLVIARPDGTPTYNFCVVVDDLDMKITHVIRGDDHVNNTPRQINIIRALGGEVPVYAHLPTVLNEQGEKMSKRHGALPVTGYRDEGYLPEAVLNYLARLGWAHGDAEIFSREQFVEWFDLEHLGKSPAQYNPEKLAWLNNHYIKVGDNTRLADLTRPFIEALGGKVEGANLVDVIALVKDRANTLKEVAQTAMLFYRGEPQADAALKAEHLTDEIRPALQALATQLAALPEWKREAISAAFKAVLAEFGLKMPKLAMPVRLLVAGQLQTPSIDAVLELFGRDTVLRRLAAA.

The 'HIGH' region motif lies at 11-21 (PSPTGFIHLGN). The 'KMSKS' region signature appears at 243-247 (KMSKR). K246 lines the ATP pocket.

Belongs to the class-I aminoacyl-tRNA synthetase family. Glutamate--tRNA ligase type 1 subfamily. Monomer.

The protein localises to the cytoplasm. The catalysed reaction is tRNA(Glu) + L-glutamate + ATP = L-glutamyl-tRNA(Glu) + AMP + diphosphate. Functionally, catalyzes the attachment of glutamate to tRNA(Glu) in a two-step reaction: glutamate is first activated by ATP to form Glu-AMP and then transferred to the acceptor end of tRNA(Glu). The polypeptide is Glutamate--tRNA ligase (Cupriavidus metallidurans (strain ATCC 43123 / DSM 2839 / NBRC 102507 / CH34) (Ralstonia metallidurans)).